Consider the following 479-residue polypeptide: MKWETVIGLEIHAQLATRTKIFSGAPTAYGAEPNTQACPVDLGLPGVLPVLNREVVRMAIKFGLAVDARIAPRSVFARKNYFYPDLPKGYQISQYDLPIVEGGHLDIELEDGASKRIGITRAHLEEDAGKSLHEDFHGMTGVDLNRAGTPLMEIVSEPDLRSPAEAAAYMKKLHALVRYLEICDGNMQEGSFRCDANVSVRPVGQEAFGTRAELKNLNSFRFVERALEYEVERQIDLLESGGEVVQETRLYDVDKGVTRSMRTKEEANDYRYFPEPDLLPVEVDAALVDEVRETLPELPDEKRRRFEEEYGLPAYDAGVLTATRDMADFFEHAVSESGGFAKRTANLLMSELLAYLNKDGLEIAESPVTPEMLGKLVARVEDETLSSRGAKDVFEAMWAGEGEPDEVIEKKGLKQVTDTSAIEALVDEAIANNPQQLEQYRAGKEKLFGFFVGQVMKASGGKANPQQVNELLKKKLDGS.

This sequence belongs to the GatB/GatE family. GatB subfamily. As to quaternary structure, heterotrimer of A, B and C subunits.

It catalyses the reaction L-glutamyl-tRNA(Gln) + L-glutamine + ATP + H2O = L-glutaminyl-tRNA(Gln) + L-glutamate + ADP + phosphate + H(+). The catalysed reaction is L-aspartyl-tRNA(Asn) + L-glutamine + ATP + H2O = L-asparaginyl-tRNA(Asn) + L-glutamate + ADP + phosphate + 2 H(+). Allows the formation of correctly charged Asn-tRNA(Asn) or Gln-tRNA(Gln) through the transamidation of misacylated Asp-tRNA(Asn) or Glu-tRNA(Gln) in organisms which lack either or both of asparaginyl-tRNA or glutaminyl-tRNA synthetases. The reaction takes place in the presence of glutamine and ATP through an activated phospho-Asp-tRNA(Asn) or phospho-Glu-tRNA(Gln). The sequence is that of Aspartyl/glutamyl-tRNA(Asn/Gln) amidotransferase subunit B from Halorhodospira halophila (strain DSM 244 / SL1) (Ectothiorhodospira halophila (strain DSM 244 / SL1)).